The primary structure comprises 225 residues: Insulin-induced gene 2 protein (225 aa).

The Cytoplasmic portion of the chain corresponds to 1–28; that stretch reads MAEGETESPRPKKRGPYISSVTSQSVNV. The chain crosses the membrane as a helical span at residues 29-51; sequence VIRGVVLFFIGVFLALVLNLLQI. Residues 52-70 are Lumenal-facing; sequence QRNVTLFPPDVITSIFSSA. A helical membrane pass occupies residues 71–88; the sequence is WWVPPCCGTASAVIGLLY. The Cytoplasmic portion of the chain corresponds to 89-103; sequence PCIDRHLGEPHKFKR. A helical membrane pass occupies residues 104–126; it reads EWSSVMRCVAVFVGINHASAKVD. Over 127–129 the chain is Lumenal; sequence FDN. The chain crosses the membrane as a helical span at residues 130 to 148; it reads NFQFSLTLAALSVGLWWTF. Topologically, residues 149–153 are cytoplasmic; that stretch reads DRSRS. Phosphoserine is present on Ser151. The chain crosses the membrane as a helical span at residues 154-175; sequence GFGLGVGIAFLATVVTQLLVYN. Topologically, residues 176–189 are lumenal; the sequence is GVYQYTSPDFLYVR. A helical membrane pass occupies residues 190–207; the sequence is SWLPCIFFAGGITMGNIG. The Cytoplasmic portion of the chain corresponds to 208-225; that stretch reads RQLAMYECKVIAEKSHQE. Cysteine sulfenic acid (-SOH); alternate is present on Cys215. Residue Cys215 forms a Glycyl cysteine thioester (Cys-Gly) (interchain with G-Cter in ubiquitin); alternate linkage. Positions 219–225 match the KxHxx motif; it reads AEKSHQE.

This sequence belongs to the INSIG family. As to quaternary structure, interacts with SCAP; interaction is direct and only takes place in the presence of sterols; it prevents interaction between SCAP and the coat protein complex II (COPII). Associates with the SCAP-SREBP complex (composed of SCAP and SREBF1/SREBP1 or SREBF2/SREBP2); association is mediated via its interaction with SCAP and only takes place in the presence of sterols. Interacts with RNF139. Interacts with RNF145. Phosphorylation at Ser-151 by PCK1 reduces binding to oxysterol, disrupting the interaction between INSIG2 and SCAP, thereby promoting nuclear translocation of SREBP proteins (SREBF1/SREBP1 or SREBF2/SREBP2) and subsequent transcription of downstream lipogenesis-related genes. Post-translationally, polyubiquitinated by AMFR/gp78 at Cys-215 in some tissues such as adipose tissues, undifferentiated myoblasts and liver, leading to its degradation. In differentiated myotubes, Cys-215 oxidation prevents ubiquitination at the same site, resulting in protein stabilization. In terms of processing, oxidized at Cys-215 in differentiated myotubes, preventing ubiquitination at the same site, and resulting in protein stabilization.

The protein localises to the endoplasmic reticulum membrane. Its function is as follows. Oxysterol-binding protein that mediates feedback control of cholesterol synthesis by controlling both endoplasmic reticulum to Golgi transport of SCAP and degradation of HMGCR. Acts as a negative regulator of cholesterol biosynthesis by mediating the retention of the SCAP-SREBP complex in the endoplasmic reticulum, thereby blocking the processing of sterol regulatory element-binding proteins (SREBPs) SREBF1/SREBP1 and SREBF2/SREBP2. Binds oxysterol, including 22-hydroxycholesterol, 24-hydroxycholesterol, 25-hydroxycholesterol and 27-hydroxycholesterol, regulating interaction with SCAP and retention of the SCAP-SREBP complex in the endoplasmic reticulum. In presence of oxysterol, interacts with SCAP, retaining the SCAP-SREBP complex in the endoplasmic reticulum, thereby preventing SCAP from escorting SREBF1/SREBP1 and SREBF2/SREBP2 to the Golgi. Sterol deprivation or phosphorylation by PCK1 reduce oxysterol-binding, disrupting the interaction between INSIG2 and SCAP, thereby promoting Golgi transport of the SCAP-SREBP complex, followed by processing and nuclear translocation of SREBF1/SREBP1 and SREBF2/SREBP2. Also regulates cholesterol synthesis by regulating degradation of HMGCR: initiates the sterol-mediated ubiquitin-mediated endoplasmic reticulum-associated degradation (ERAD) of HMGCR via recruitment of the reductase to the ubiquitin ligase RNF139. This chain is Insulin-induced gene 2 protein, found in Rattus norvegicus (Rat).